Here is a 345-residue protein sequence, read N- to C-terminus: Magnesium-chelatase 38 kDa subunit (345 aa).

Position 35-42 (35-42) interacts with ATP; it reads GDRGTGKS.

Belongs to the Mg-chelatase subunits D/I family.

It catalyses the reaction protoporphyrin IX + Mg(2+) + ATP + H2O = Mg-protoporphyrin IX + ADP + phosphate + 3 H(+). It participates in porphyrin-containing compound metabolism; bacteriochlorophyll biosynthesis. In terms of biological role, involved in bacteriochlorophyll biosynthesis; introduces a magnesium ion into protoporphyrin IX to yield Mg-protoporphyrin IX. The polypeptide is Magnesium-chelatase 38 kDa subunit (bchI) (Acidiphilium rubrum).